The sequence spans 433 residues: DNA methyltransferase 1-associated protein 1 (433 aa).

Positions M1–K204 are required for nuclear localization. Positions N148–V197 constitute a Myb-like domain. Positions V186–N281 form a coiled coil. The span at E252–D264 shows a compositional bias: basic and acidic residues. A disordered region spans residues E252–R305. A compositionally biased stretch (polar residues) spans L268–T285. Residues Y288 to Q299 are compositionally biased toward basic residues.

As to quaternary structure, interacts with Rel. Interacts with akirin and Bap55.

The protein resides in the nucleus. Its subcellular location is the cytoplasm. Functionally, involved in transcription repression and activation. Required for larvae and pupal development, and for normal innate immune responses. Involved in modulating the activation of the immune deficiency pathway (Imd), acting either downstream of, or at the level of, the NF-kappa-B factor Rel. Possibly functions with akirin to regulate Rel, and its interaction with the Brahma complex protein Bap55 suggests that it may regulate the IMD pathway at the level of chromatin remodeling. The polypeptide is DNA methyltransferase 1-associated protein 1 (Drosophila melanogaster (Fruit fly)).